The primary structure comprises 111 residues: Large ribosomal subunit protein uL24 (111 aa).

The protein belongs to the universal ribosomal protein uL24 family. In terms of assembly, part of the 50S ribosomal subunit.

Functionally, one of two assembly initiator proteins, it binds directly to the 5'-end of the 23S rRNA, where it nucleates assembly of the 50S subunit. In terms of biological role, one of the proteins that surrounds the polypeptide exit tunnel on the outside of the subunit. The chain is Large ribosomal subunit protein uL24 from Streptococcus pneumoniae (strain Hungary19A-6).